Reading from the N-terminus, the 121-residue chain is Large ribosomal subunit protein uL18 (121 aa).

It belongs to the universal ribosomal protein uL18 family. Part of the 50S ribosomal subunit; part of the 5S rRNA/L5/L18/L25 subcomplex. Contacts the 5S and 23S rRNAs.

This is one of the proteins that bind and probably mediate the attachment of the 5S RNA into the large ribosomal subunit, where it forms part of the central protuberance. The chain is Large ribosomal subunit protein uL18 from Mesomycoplasma hyopneumoniae (strain J / ATCC 25934 / NCTC 10110) (Mycoplasma hyopneumoniae).